The sequence spans 315 residues: Protein translocase subunit SecF (315 aa).

6 consecutive transmembrane segments (helical) span residues 12-32 (AWIVSSLLVLISIFAMAISWA), 136-156 (ALFRSGVLALVISLLGIIIYL), 166-186 (VFAIIALLYDALITMGAFAIF), 188-208 (LVGGVEVDSLFLVALLTIIGF), 247-267 (SINTSLTTSLPLVAIFLFGGD), and 271-291 (FFALALIIGFASGVYSSIFMA).

The protein belongs to the SecD/SecF family. SecF subfamily. Forms a complex with SecD. Part of the essential Sec protein translocation apparatus which comprises SecA, SecYEG and auxiliary proteins SecDF. Other proteins may also be involved.

It localises to the cell inner membrane. Part of the Sec protein translocase complex. Interacts with the SecYEG preprotein conducting channel. SecDF uses the proton motive force (PMF) to complete protein translocation after the ATP-dependent function of SecA. In terms of biological role, probably participates in protein translocation into and across both the cytoplasmic and thylakoid membranes in cyanobacterial cells. The polypeptide is Protein translocase subunit SecF (Synechocystis sp. (strain ATCC 27184 / PCC 6803 / Kazusa)).